The sequence spans 152 residues: Large ribosomal subunit protein uL24 (152 aa).

Residues Val128–Lys152 form a disordered region.

This sequence belongs to the universal ribosomal protein uL24 family. Part of the 50S ribosomal subunit.

One of two assembly initiator proteins, it binds directly to the 5'-end of the 23S rRNA, where it nucleates assembly of the 50S subunit. Functionally, located at the polypeptide exit tunnel on the outside of the subunit. The protein is Large ribosomal subunit protein uL24 of Staphylothermus marinus (strain ATCC 43588 / DSM 3639 / JCM 9404 / F1).